The chain runs to 277 residues: MADPWQECMDYAVILARQAGEMIREALKNEMDVMIKSSPADLVTVTDQKVEKMLMSSIKEKYPCHSFIGEESVAAGEKTVFTESPTWFIDPIDGTTNFVHRFPFVAVSIGFLVNKEMEFGIVYSCVEDKMYTGRKGKGAFCNGQKLQVSQQEDITKSLLVTELGSSRKPETLRIVLSNMEKLCSIPIHGIRSVGTAAVNMCLVATGGADAYYEMGIHCWDMAGAGIIVTEAGGVLMDVTGGPFDLMSRRIIAANSITLAKRIAKEIEIIPLQRDDES.

The Mg(2+) site is built by glutamate 70, aspartate 90, isoleucine 92, and aspartate 93. Residues glutamate 70, 90-95 (DPIDGT), 194-196 (GTA), glutamate 213, and aspartate 220 each bind substrate. Residue aspartate 220 coordinates Mg(2+).

Belongs to the inositol monophosphatase superfamily. In terms of assembly, homodimer. Mg(2+) is required as a cofactor. In terms of tissue distribution, mostly expressed in brain, small intestine, testis, kidney, and spleen (at protein level).

It localises to the cytoplasm. It carries out the reaction a myo-inositol phosphate + H2O = myo-inositol + phosphate. The catalysed reaction is 1D-myo-inositol 1-phosphate + H2O = myo-inositol + phosphate. It catalyses the reaction 1D-myo-inositol 2-phosphate + H2O = myo-inositol + phosphate. The enzyme catalyses 1D-myo-inositol 3-phosphate + H2O = myo-inositol + phosphate. It carries out the reaction 1D-myo-inositol 4-phosphate + H2O = myo-inositol + phosphate. The catalysed reaction is 1D-myo-inositol 5-phosphate + H2O = myo-inositol + phosphate. It catalyses the reaction 1D-myo-inositol 6-phosphate + H2O = myo-inositol + phosphate. The enzyme catalyses scyllo-inositol 1-phosphate + H2O = scyllo-inositol + phosphate. It carries out the reaction alpha-D-galactose 1-phosphate + H2O = D-galactose + phosphate. The catalysed reaction is alpha-D-glucose 1-phosphate + H2O = D-glucose + phosphate. It catalyses the reaction D-glucose 6-phosphate + H2O = D-glucose + phosphate. The enzyme catalyses beta-D-fructose 1-phosphate + H2O = D-fructose + phosphate. It carries out the reaction glycerol 2-phosphate + H2O = glycerol + phosphate. The catalysed reaction is adenosine 2'-phosphate + H2O = adenosine + phosphate. It participates in polyol metabolism; myo-inositol biosynthesis; myo-inositol from D-glucose 6-phosphate: step 2/2. With respect to regulation, inhibited by Li(+), Ca(2+) and Mn(2+), but also by Mg(2+) at concentrations above 3 mM. In terms of biological role, phosphatase involved in the dephosphorylation of myo-inositol monophosphate to generate myo-inositol. Is also able to dephosphorylate scyllo-inositol-phosphate, myo-inositol 1,4-diphosphate, scyllo-inositol-1,3-diphosphate and scyllo-inositol-1,4-diphosphate. Also dephosphorylates in vitro other sugar-phosphates including D-galactose-1-phosphate, glucose-1-phosphate, glucose-6-phosphate, fructose-1-phosphate, beta-glycerophosphate and 2'-AMP. Responsible for the provision of inositol required for synthesis of phosphatidylinositol and polyphosphoinositides, and involved in maintaining normal brain function. Has been implicated as the pharmacological target for lithium Li(+) action in brain. The protein is Inositol monophosphatase 1 (Impa1) of Mus musculus (Mouse).